Consider the following 317-residue polypeptide: Taste receptor type 2 member 14 (317 aa).

Residues 1–7 (MGDVIKS) are Extracellular-facing. Residues 8–28 (IFTFVLIVEFIIGNLGNSFIA) form a helical membrane-spanning segment. Over 29–55 (LVNCIDWVKGRKISSVDQILTALAISR) the chain is Cytoplasmic. A helical membrane pass occupies residues 56 to 76 (ISLVWLIFGSWCVSVFLPALF). At 77–87 (ATEKMFRMLTN) the chain is on the extracellular side. Cholesterol contacts are provided by Thr86 and Trp89. The chain crosses the membrane as a helical span at residues 88–108 (IWTVINHFSVWLATGLGTFYF). Residues 109–129 (LKIANFSNSIFLYLKWRVKKV) lie on the Cytoplasmic side of the membrane. The chain crosses the membrane as a helical span at residues 130 to 150 (VLVLLLVTSVFLFLNIALINI). At 151-184 (HINASINGYRRNKTCSSDSSNFTRFSSLIVLTST) the chain is on the extracellular side. 3 N-linked (GlcNAc...) asparagine glycosylation sites follow: Asn153, Asn162, and Asn171. Cholesterol is bound at residue Val180. Residues 185 to 205 (VFIFIPFTLSLAMFLLLIFSL) traverse the membrane as a helical segment. Over 206–232 (WKHRKKMQHXVKRSGDASTKAHRGVKS) the chain is Cytoplasmic. The chain crosses the membrane as a helical span at residues 233–253 (VITFFLLYAIFCLSFFISVWT). Residues 254-261 (SERLEENL) are Extracellular-facing. Residues 262–282 (IILSQVMGMAYPSCHSCVLIL) form a helical membrane-spanning segment. The cholesterol site is built by Ser265 and Met268. Residues 283-317 (GNKKLRQASLSVLLWLRYMFKDGEPSGHKEFRESS) are Cytoplasmic-facing.

Belongs to the G-protein coupled receptor T2R family. Core component of the TAS2R14-GNAI1 complex, consisting of TAS2R14, GNAI1, GNB1 and GNG2; within the complex interacts with GNAI1. Core component of the TAS2R14-GNAT3 complex, consisting of TAS2R14, GNAT3, GNB1 and GNG2; within the complex interacts with GNAT3. Core component of the TAS2R14-GNAS2 complex, consisting of TAS2R14, GNAS2, GNB1 and GNG2; within the complex interacts with GNAS2.

The protein localises to the membrane. The catalysed reaction is Ca(2+)(in) = Ca(2+)(out). The enzyme catalyses 3',5'-cyclic AMP(in) = 3',5'-cyclic AMP(out). Basal activity is enhanced by binding to bitter tastants, such as flufenamic acid and aristolochic acid. Regulated by cholesterol in a concentration-dependent manner. Its function is as follows. Gustducin-linked G-protein coupled receptor that plays a role in the perception of bitterness. The activity of this receptor stimulates GNAT3, activating the gustducin G-protein pathway. Likely plays a role in sensing the chemical composition of the gastrointestinal content and other extra-oral tissues via the inhibitory G-protein pathways. This is Taste receptor type 2 member 14 (TAS2R14) from Gorilla gorilla gorilla (Western lowland gorilla).